The sequence spans 119 residues: Ribonuclease P protein component (119 aa).

The protein belongs to the RnpA family. Consists of a catalytic RNA component (M1 or rnpB) and a protein subunit.

It catalyses the reaction Endonucleolytic cleavage of RNA, removing 5'-extranucleotides from tRNA precursor.. Its function is as follows. RNaseP catalyzes the removal of the 5'-leader sequence from pre-tRNA to produce the mature 5'-terminus. It can also cleave other RNA substrates such as 4.5S RNA. The protein component plays an auxiliary but essential role in vivo by binding to the 5'-leader sequence and broadening the substrate specificity of the ribozyme. In Aromatoleum aromaticum (strain DSM 19018 / LMG 30748 / EbN1) (Azoarcus sp. (strain EbN1)), this protein is Ribonuclease P protein component.